A 337-amino-acid polypeptide reads, in one-letter code: Methylthioribose-1-phosphate isomerase (337 aa).

Substrate contacts are provided by residues 51 to 53 (RGA), R88, and Q187. The active-site Proton donor is D228. A substrate-binding site is contributed by 238 to 239 (NK).

This sequence belongs to the eIF-2B alpha/beta/delta subunits family. MtnA subfamily.

It carries out the reaction 5-(methylsulfanyl)-alpha-D-ribose 1-phosphate = 5-(methylsulfanyl)-D-ribulose 1-phosphate. It functions in the pathway amino-acid biosynthesis; L-methionine biosynthesis via salvage pathway; L-methionine from S-methyl-5-thio-alpha-D-ribose 1-phosphate: step 1/6. Catalyzes the interconversion of methylthioribose-1-phosphate (MTR-1-P) into methylthioribulose-1-phosphate (MTRu-1-P). The polypeptide is Methylthioribose-1-phosphate isomerase (Anaeromyxobacter sp. (strain Fw109-5)).